The chain runs to 965 residues: Vacuolar protein sorting-associated protein 54 (965 aa).

Ser8 carries the post-translational modification Phosphoserine. The stretch at 228–249 forms a coiled coil; sequence ELQDYLKKTSQAVKMLRDKIAQ. The segment at 516 to 558 is disordered; that stretch reads ASAAVDTTSQRNTSPHSEPCSSDSVSEPECTTDSSSSKEQTPA. Over residues 520–558 the composition is skewed to polar residues; sequence VDTTSQRNTSPHSEPCSSDSVSEPECTTDSSSSKEQTPA.

Belongs to the VPS54 family. Component of the Golgi-associated retrograde protein (GARP) complex, also called VFT (VPS fifty-three) complex, composed of VPS51, VPS52, VPS53 and VPS54. EIPR1 interacts with GARP complex and mediates its recruitment to the trans-Golgi network. Interacts with VPS51 in an EIPR1-independent manner. In terms of tissue distribution, ubiquitously expressed at low level.

Its subcellular location is the golgi apparatus. It localises to the trans-Golgi network. It is found in the membrane. Its function is as follows. Acts as a component of the GARP complex that is involved in retrograde transport from early and late endosomes to the trans-Golgi network (TGN). The GARP complex is required for the maintenance of the cycling of mannose 6-phosphate receptors between the TGN and endosomes, this cycling is necessary for proper lysosomal sorting of acid hydrolases such as CTSD. Within the GARP complex, required to tether the complex to the TGN. Not involved in endocytic recycling. The chain is Vacuolar protein sorting-associated protein 54 (Vps54) from Rattus norvegicus (Rat).